A 212-amino-acid polypeptide reads, in one-letter code: Uridine kinase (212 aa).

Position 12–19 (12–19 (GGSGGGKT)) interacts with ATP.

It belongs to the uridine kinase family.

The protein localises to the cytoplasm. It carries out the reaction uridine + ATP = UMP + ADP + H(+). The enzyme catalyses cytidine + ATP = CMP + ADP + H(+). It participates in pyrimidine metabolism; CTP biosynthesis via salvage pathway; CTP from cytidine: step 1/3. It functions in the pathway pyrimidine metabolism; UMP biosynthesis via salvage pathway; UMP from uridine: step 1/1. This is Uridine kinase from Streptococcus pneumoniae serotype 2 (strain D39 / NCTC 7466).